Reading from the N-terminus, the 327-residue chain is Aldo-keto reductase FVEG_12638 (327 aa).

Residue Asp-51 participates in NADP(+) binding. Tyr-56 acts as the Proton donor in catalysis. Substrate is bound at residue His-122. NADP(+) is bound by residues 152-153 (SE), 202-212 (GPLGHGWLVED), and 286-294 (ENFTSRDIE).

The protein belongs to the aldo/keto reductase family. Aldo/keto reductase 2 subfamily.

Aldo-keto reductase; part of the Fusarium detoxification of benzoxazolinone cluster 2 (FDB2) involved in the degradation of benzoxazolinones produced by the host plant. Maize, wheat, and rye produce the 2 benzoxazinone phytoanticipins 2,4-dihy-droxy-7-methoxy-1,4-benzoxazin-3-one (DIMBOA) and 2,4-dihydroxy-1,4-benzoxazin-3-one (DIBOA) that, due to their inherent instability once released, spontaneously degrade to the more stable corresponding benzoxazolinones, 6-methoxy-2-benzoxazolinone (MBOA) and 2-benzoxazolinone (BOA), respectively. The first step in the detoxification of benzoxazolinones involves the hydrolysis of the cyclic ester bond of benzoxazolinones by the FDB1 cluster gamma-lactamase MBL1 to aminophenols. MBL1 is able to convert BOA into 2-aminophenol (2-AP), as well as MBOA into 5-methoxy-2-aminophenol (2-AMP). The FDB2 cluster N-malonyltransferase FDB2/NAT1 then metabolizes aminophenols via N-malonylation to non-toxic malonamic acids. FDB2/NAT1 converts 2-AP into N-(2-hydroxyphenyl) malonamic acid (HPMA) and 2-AMP into N-(2-hydroxy-4-methoxyphenyl) malonamic acid (HMPMA). The duplicated dienlactone hydrolases DLH1 and DLH2 may provide redundant function for hydrolyzing the lactone moiety in the BOA molecule. The roles of the amidases an other enzymes encoded by the 2 FDB clusters have not been identified so far. The chain is Aldo-keto reductase FVEG_12638 from Gibberella moniliformis (strain M3125 / FGSC 7600) (Maize ear and stalk rot fungus).